Reading from the N-terminus, the 156-residue chain is Small ribosomal subunit protein uS7 (156 aa).

It belongs to the universal ribosomal protein uS7 family. As to quaternary structure, part of the 30S ribosomal subunit. Contacts proteins S9 and S11.

In terms of biological role, one of the primary rRNA binding proteins, it binds directly to 16S rRNA where it nucleates assembly of the head domain of the 30S subunit. Is located at the subunit interface close to the decoding center, probably blocks exit of the E-site tRNA. The sequence is that of Small ribosomal subunit protein uS7 from Dictyoglomus thermophilum (strain ATCC 35947 / DSM 3960 / H-6-12).